A 427-amino-acid polypeptide reads, in one-letter code: Glutamyl-tRNA reductase (427 aa).

Residues 48–51 (TCNR), S99, 104–106 (EDQ), and Q110 each bind substrate. The active-site Nucleophile is C49. 179–184 (GAGEMG) lines the NADP(+) pocket.

This sequence belongs to the glutamyl-tRNA reductase family. Homodimer.

The enzyme catalyses (S)-4-amino-5-oxopentanoate + tRNA(Glu) + NADP(+) = L-glutamyl-tRNA(Glu) + NADPH + H(+). Its pathway is porphyrin-containing compound metabolism; protoporphyrin-IX biosynthesis; 5-aminolevulinate from L-glutamyl-tRNA(Glu): step 1/2. Catalyzes the NADPH-dependent reduction of glutamyl-tRNA(Glu) to glutamate 1-semialdehyde (GSA). The chain is Glutamyl-tRNA reductase from Methanocella arvoryzae (strain DSM 22066 / NBRC 105507 / MRE50).